The primary structure comprises 325 residues: Replication factor C small subunit (325 aa).

Residue 52 to 59 participates in ATP binding; sequence GPAGVGKT.

Belongs to the activator 1 small subunits family. RfcS subfamily. As to quaternary structure, heteromultimer composed of small subunits (RfcS) and large subunits (RfcL).

Its function is as follows. Part of the RFC clamp loader complex which loads the PCNA sliding clamp onto DNA. This chain is Replication factor C small subunit, found in Natronomonas pharaonis (strain ATCC 35678 / DSM 2160 / CIP 103997 / JCM 8858 / NBRC 14720 / NCIMB 2260 / Gabara) (Halobacterium pharaonis).